The sequence spans 392 residues: Anhydro-N-acetylmuramic acid kinase (392 aa).

22-29 (GTSMDGVD) lines the ATP pocket.

It belongs to the anhydro-N-acetylmuramic acid kinase family.

It catalyses the reaction 1,6-anhydro-N-acetyl-beta-muramate + ATP + H2O = N-acetyl-D-muramate 6-phosphate + ADP + H(+). The protein operates within amino-sugar metabolism; 1,6-anhydro-N-acetylmuramate degradation. It functions in the pathway cell wall biogenesis; peptidoglycan recycling. Its function is as follows. Catalyzes the specific phosphorylation of 1,6-anhydro-N-acetylmuramic acid (anhMurNAc) with the simultaneous cleavage of the 1,6-anhydro ring, generating MurNAc-6-P. Is required for the utilization of anhMurNAc either imported from the medium or derived from its own cell wall murein, and thus plays a role in cell wall recycling. The sequence is that of Anhydro-N-acetylmuramic acid kinase from Burkholderia mallei (strain NCTC 10229).